A 134-amino-acid polypeptide reads, in one-letter code: Large-conductance mechanosensitive channel (134 aa).

2 consecutive transmembrane segments (helical) span residues 16–36 (VIDLAVAVVIGAAFGKIVTAL) and 81–101 (GDFLNTILQFIIIAFAIFIIV).

This sequence belongs to the MscL family. As to quaternary structure, homopentamer.

It is found in the cell inner membrane. Functionally, channel that opens in response to stretch forces in the membrane lipid bilayer. May participate in the regulation of osmotic pressure changes within the cell. The polypeptide is Large-conductance mechanosensitive channel (Xylella fastidiosa (strain M12)).